The sequence spans 1516 residues: Lysine-specific demethylase 5C (1516 aa).

A JmjN domain is found at 14-55 (CPVFEPSWAEFRDPLGYIAKIRPIAEKSGICKIRPPADWQPP). Residues 24–128 (FRDPLGYIAK…IVYPYEMYQS (105 aa)) enclose the ARID domain. Residues 142–151 (NEEKDKEYKP) show a composition bias toward basic and acidic residues. The segment at 142 to 186 (NEEKDKEYKPHSIPLRQSVQPSKFNSYGRRAKRLQPDPEPTEEDI) is disordered. Residues 156–166 (LRQSVQPSKFN) show a composition bias toward polar residues. Glycyl lysine isopeptide (Lys-Gly) (interchain with G-Cter in SUMO2) cross-links involve residues lysine 164, lysine 188, lysine 203, and lysine 233. The interval 216-262 (LRKKDKEGPECPPTVVVKEESGGDVKVESTSPKTFLESKEELSHSPE) is disordered. Residues 232–242 (VKEESGGDVKV) are compositionally biased toward basic and acidic residues. Serine 246 carries the phosphoserine modification. Residue lysine 254 forms a Glycyl lysine isopeptide (Lys-Gly) (interchain with G-Cter in SUMO2) linkage. Residues serine 260 and serine 276 each carry the phosphoserine modification. A PHD-type 1 zinc finger spans residues 283–333 (SYVCRMCSRGDEDDKLLLCDGCDDNYHIFCLLPPLPEIPKGVWRCPKCVMA). Residue tyrosine 399 coordinates 2-oxoglutarate. Residues 427–593 (EYATSGWNLN…AGRQCIEHYR (167 aa)) form the JmjC domain. Residues histidine 473 and glutamate 475 each coordinate Fe cation. Residues serine 481, asparagine 483, and lysine 491 each contribute to the 2-oxoglutarate site. Histidine 561 contacts Fe cation. The segment at 666-718 (CIKCKTTCFLSALACYDCPDGLVCLSHINDLCKCSSSRQYLRYRYTLDELPAM) adopts a C5HC2 zinc-finger fold. 2 positions are modified to phosphoserine: serine 852 and serine 856. Residue lysine 1086 forms a Glycyl lysine isopeptide (Lys-Gly) (interchain with G-Cter in SUMO2) linkage. The PHD-type 2 zinc finger occupies 1144-1209 (TSICVCGQVP…KFLCPLCMRS (66 aa)). Residues 1274–1305 (LQAEPRPEEPPTYPSTPAFDPLREGSGKDMPK) are disordered. The span at 1294 to 1304 (PLREGSGKDMP) shows a compositional bias: basic and acidic residues. A Phosphoserine modification is found at serine 1318. Residues 1400–1516 (ERHGSRARGR…CPQQPPQQQL (117 aa)) form a disordered region. The span at 1404–1419 (SRARGRALERRRRRKV) shows a compositional bias: basic residues. The segment covering 1420–1437 (DRGGEGDDPAREELEPKR) has biased composition (basic and acidic residues). A compositionally biased stretch (acidic residues) spans 1444-1459 (EAEEAHEEEELEEETG). 2 stretches are compositionally biased toward polar residues: residues 1471 to 1481 (GSPSTQENQNG) and 1489 to 1500 (SSGSSVPFSTLT).

This sequence belongs to the JARID1 histone demethylase family. In terms of assembly, part of two distinct complexes, one containing E2F6, and the other containing REST. Interacts with ZMYND8. Fe(2+) serves as cofactor.

Its subcellular location is the nucleus. It catalyses the reaction N(6),N(6),N(6)-trimethyl-L-lysyl(4)-[histone H3] + 3 2-oxoglutarate + 3 O2 = L-lysyl(4)-[histone H3] + 3 formaldehyde + 3 succinate + 3 CO2. Histone demethylase that specifically demethylates 'Lys-4' of histone H3, thereby playing a central role in histone code. Does not demethylate histone H3 'Lys-9', H3 'Lys-27', H3 'Lys-36', H3 'Lys-79' or H4 'Lys-20'. Demethylates trimethylated and dimethylated but not monomethylated H3 'Lys-4'. Participates in transcriptional repression of neuronal genes by recruiting histone deacetylases and REST at neuron-restrictive silencer elements. The chain is Lysine-specific demethylase 5C (KDM5C) from Sus scrofa (Pig).